Reading from the N-terminus, the 153-residue chain is UPF0260 protein YcgN (153 aa).

It belongs to the UPF0260 family.

The sequence is that of UPF0260 protein YcgN from Shigella boydii serotype 18 (strain CDC 3083-94 / BS512).